Consider the following 289-residue polypeptide: Protease HtpX homolog (289 aa).

The next 2 membrane-spanning stretches (helical) occupy residues 9 to 29 (TGVL…LIGG) and 31 to 51 (GGMI…YWFS). Zn(2+) is bound at residue H133. E134 is a catalytic residue. H137 lines the Zn(2+) pocket. 2 helical membrane-spanning segments follow: residues 143 to 163 (TLIQ…VDFA) and 182 to 202 (IGLI…QLAI). E207 lines the Zn(2+) pocket.

It belongs to the peptidase M48B family. Zn(2+) serves as cofactor.

It is found in the cell membrane. The protein is Protease HtpX homolog of Pyrococcus abyssi (strain GE5 / Orsay).